Reading from the N-terminus, the 558-residue chain is Podocalyxin (558 aa).

A signal peptide spans 1 to 22; that stretch reads MRCALALSALLLLLSTPPLLPS. Positions 20 to 29 are enriched in pro residues; the sequence is LPSSPSPSPS. Disordered stretches follow at residues 20–50, 83–210, and 270–338; these read LPSS…PTPA, LGVS…DHLM, and SVIS…VAHE. The Extracellular portion of the chain corresponds to 23-461; sequence SPSPSPSPSQ…EEAEDRFSMP (439 aa). 2 stretches are compositionally biased toward polar residues: residues 32 to 50 and 83 to 107; these read QNAT…PTPA and LGVS…NTTV. N-linked (GlcNAc...) asparagine glycans are attached at residues Asn-33, Asn-43, and Asn-104. A compositionally biased stretch (low complexity) spans 125-142; that stretch reads STKSADTTTVATSTATAK. Polar residues-rich tracts occupy residues 143–173, 190–204, and 270–302; these read PNTT…LTST, RQPT…PTSS, and SVIS…TSPA. Residue Asn-144 is glycosylated (N-linked (GlcNAc...) asparagine). Low complexity predominate over residues 313-324; that stretch reads TMSSSPTAASTT. Asn-360 carries an N-linked (GlcNAc...) asparagine glycan. Residues 462–482 traverse the membrane as a helical segment; sequence LIITIVCMASFLLLVAALYGC. Over 483 to 558 the chain is Cytoplasmic; that stretch reads CHQRLSQRKD…DLDEEEDTHL (76 aa). The residue at position 518 (Thr-518) is a Phosphothreonine. Phosphoserine occurs at positions 529 and 537. Thr-556 is subject to Phosphothreonine.

This sequence belongs to the podocalyxin family. As to quaternary structure, monomer; when associated with the membrane raft. Oligomer; when integrated in the apical membrane. Interacts (via the C-terminal PDZ-binding motif DTHL) with NHERF1 (via the PDZ domains); the interaction is not detected in glomerular epithelium cells, take place early in the secretory pathway and is necessary for its apical membrane sorting. Found in a complex with EZR, PODXL and NHERF2. Associates with the actin cytoskeleton through complex formation with EZR and NHERF2. Interacts (via the C-terminal PDZ-binding motif DTHL) with NHERF2 (via the PDZ 1 domain); interaction is detected in glomerular epithelium cells. Interacts with EZR. In terms of processing, N- and O-linked glycosylated. Sialoglycoprotein. In terms of tissue distribution, glomerular epithelium cell (podocyte).

Its subcellular location is the apical cell membrane. It localises to the cell projection. The protein localises to the lamellipodium. It is found in the filopodium. The protein resides in the ruffle. Its subcellular location is the microvillus. It localises to the membrane raft. The protein localises to the membrane. In terms of biological role, involved in the regulation of both adhesion and cell morphology and cancer progression. Functions as an anti-adhesive molecule that maintains an open filtration pathway between neighboring foot processes in the podocyte by charge repulsion. Acts as a pro-adhesive molecule, enhancing the adherence of cells to immobilized ligands, increasing the rate of migration and cell-cell contacts in an integrin-dependent manner. Induces the formation of apical actin-dependent microvilli. Involved in the formation of a preapical plasma membrane subdomain to set up initial epithelial polarization and the apical lumen formation during renal tubulogenesis. Plays a role in cancer development and aggressiveness by inducing cell migration and invasion through its interaction with the actin-binding protein EZR. Affects EZR-dependent signaling events, leading to increased activities of the MAPK and PI3K pathways in cancer cells. The polypeptide is Podocalyxin (PODXL) (Homo sapiens (Human)).